Here is a 142-residue protein sequence, read N- to C-terminus: Nucleoside diphosphate kinase (142 aa).

Lys-11, Phe-59, Arg-87, Thr-93, Arg-104, and Asn-114 together coordinate ATP. Catalysis depends on His-117, which acts as the Pros-phosphohistidine intermediate.

It belongs to the NDK family. As to quaternary structure, homotetramer. The cofactor is Mg(2+).

It is found in the cytoplasm. The enzyme catalyses a 2'-deoxyribonucleoside 5'-diphosphate + ATP = a 2'-deoxyribonucleoside 5'-triphosphate + ADP. It catalyses the reaction a ribonucleoside 5'-diphosphate + ATP = a ribonucleoside 5'-triphosphate + ADP. Its function is as follows. Major role in the synthesis of nucleoside triphosphates other than ATP. The ATP gamma phosphate is transferred to the NDP beta phosphate via a ping-pong mechanism, using a phosphorylated active-site intermediate. The chain is Nucleoside diphosphate kinase from Aeromonas salmonicida (strain A449).